The primary structure comprises 233 residues: MSVISMKQLLEAGVHFGHQTRRWNPKMAPYIFTERNGIYIIDLQKTVKKAEEAYNFIREVSEAGKDVIFVGTKKQAQEAVKEEAERSNMYFVNHRWLGGMLTNFTTIKTRINRLNKLDEMEQDGTFDVLPKKEVIKLKLEREKLQRNLGGIKELDASNIGAMFVVDPRKEKNAIAEAKILGIPVVAIVDTNCDPEEVDYVIPGNDDAIRAVKLIAGKMADAIIEGRQGEQLAE.

The protein belongs to the universal ribosomal protein uS2 family.

This Clostridium perfringens (strain ATCC 13124 / DSM 756 / JCM 1290 / NCIMB 6125 / NCTC 8237 / Type A) protein is Small ribosomal subunit protein uS2.